A 130-amino-acid polypeptide reads, in one-letter code: Small ribosomal subunit protein uS9 (130 aa).

The protein belongs to the universal ribosomal protein uS9 family.

The protein is Small ribosomal subunit protein uS9 of Halorhodospira halophila (strain DSM 244 / SL1) (Ectothiorhodospira halophila (strain DSM 244 / SL1)).